The primary structure comprises 348 residues: 2-heptyl-4(1H)-quinolone synthase subunit PqsC (348 aa).

The active-site Acyl-thioester intermediate is the Cys-129. Residue His-269 is part of the active site.

Belongs to the thiolase-like superfamily. FabH family. Forms a tight complex with PqsB.

Its subcellular location is the cytoplasm. The enzyme catalyses (2-aminobenzoyl)acetate + octanoyl-CoA + H(+) = 2-heptyl-4(1H)-quinolone + CO2 + CoA + H2O. Its activity is regulated as follows. Folding of PqsC and binding of octanoate are promoted by PqsB. Binding of the octanoyl group probably increases the binding affinity of the complex for 2-ABA. Activity of the complex is inhibited by 2-aminoacetophenone (2-AA). In terms of biological role, required for the biosynthesis of the quorum-sensing signaling molecules 2-heptyl-4(1H)-quinolone (HHQ) and 2-heptyl-3-hydroxy-4(1H)-quinolone (Pseudomonas quinolone signal or PQS), which are important for biofilm formation and virulence. The PqsC/PqsB complex catalyzes the condensation of 2-aminobenzoylacetate (2-ABA) and octanoyl-CoA to form HHQ. First, PqsC acquires an octanoyl group from octanoyl-CoA and forms an octanoyl-PqsC intermediate. Then, together with PqsB, it catalyzes the coupling of 2-ABA with the octanoate group, leading to decarboxylation and dehydration, and resulting in closure of the quinoline ring. This chain is 2-heptyl-4(1H)-quinolone synthase subunit PqsC, found in Pseudomonas aeruginosa (strain ATCC 15692 / DSM 22644 / CIP 104116 / JCM 14847 / LMG 12228 / 1C / PRS 101 / PAO1).